We begin with the raw amino-acid sequence, 635 residues long: Threonine--tRNA ligase (635 aa).

Positions 1-58 (MIQVTCDQKNYEVLEGTTAAELAKQLKNSHQFIGVLINERPRDLSTHLNEGDTLVFLT) constitute a TGS domain. The interval 237 to 528 (DHRVLGAKLD…LIENFKGRFP (292 aa)) is catalytic. Positions 328, 379, and 505 each coordinate Zn(2+).

Belongs to the class-II aminoacyl-tRNA synthetase family. In terms of assembly, homodimer. Requires Zn(2+) as cofactor.

The protein resides in the cytoplasm. It catalyses the reaction tRNA(Thr) + L-threonine + ATP = L-threonyl-tRNA(Thr) + AMP + diphosphate + H(+). In terms of biological role, catalyzes the attachment of threonine to tRNA(Thr) in a two-step reaction: L-threonine is first activated by ATP to form Thr-AMP and then transferred to the acceptor end of tRNA(Thr). Also edits incorrectly charged L-seryl-tRNA(Thr). In Chlamydia pneumoniae (Chlamydophila pneumoniae), this protein is Threonine--tRNA ligase.